The sequence spans 442 residues: MSEMTPREIVHELDAHIIGQKKAKRSVAVALRNRWRRMQLDVDFRQEVTPKNILMIGPTGVGKTEIARRLAKLANAPFIKVEATKFTEVGYVGKEVEQIIRDLTDIAIKLTREQQMGKCRQLAEEHAEERILDALLPKPKNDWESTDTDTGSNTRQIFRKKLREGQLDDKEIDIDVAQPQIGIEIMSPPGMEEMTNQLQSLFKNMGQAPAKRRKMKIKEAFKLLIEEEAAKLVNQEDLKEQAIEMVEQHGIVFLDEIDKICKRGETSGPDVSREGVQRDLLPLVEGCTVTTKHGMVKTDHILFIASGAFQMAKPSDLIPELQGRLPIRVELDALSADDFKRILTEPHASLTEQYVALMGTEGVKVEFTESGIESIAKAAWQVNERTENIGARRLHTVMEKLMEDISYEASDKSGSAFVIDADYVSAHLDNLVQDEDLSRFIL.

Residues Ile18, 60-65 (GVGKTE), Asp255, Glu320, and Arg392 contribute to the ATP site.

The protein belongs to the ClpX chaperone family. HslU subfamily. As to quaternary structure, a double ring-shaped homohexamer of HslV is capped on each side by a ring-shaped HslU homohexamer. The assembly of the HslU/HslV complex is dependent on binding of ATP.

Its subcellular location is the cytoplasm. In terms of biological role, ATPase subunit of a proteasome-like degradation complex; this subunit has chaperone activity. The binding of ATP and its subsequent hydrolysis by HslU are essential for unfolding of protein substrates subsequently hydrolyzed by HslV. HslU recognizes the N-terminal part of its protein substrates and unfolds these before they are guided to HslV for hydrolysis. In Shewanella putrefaciens (strain CN-32 / ATCC BAA-453), this protein is ATP-dependent protease ATPase subunit HslU.